A 289-amino-acid chain; its full sequence is 3-methyl-2-oxobutanoate hydroxymethyltransferase (289 aa).

Positions 1–10 (MSDSKSSAST) are enriched in low complexity. Positions 1–33 (MSDSKSSASTSEDRLYGSAPSHDVPKRKTRTHH) are disordered. 2 residues coordinate Mg(2+): aspartate 70 and aspartate 109. 3-methyl-2-oxobutanoate contacts are provided by residues 70–71 (DS), aspartate 109, and lysine 139. Mg(2+) is bound at residue glutamate 141. Catalysis depends on glutamate 207, which acts as the Proton acceptor.

Belongs to the PanB family. In terms of assembly, homodecamer; pentamer of dimers. Mg(2+) serves as cofactor.

It localises to the cytoplasm. The enzyme catalyses 3-methyl-2-oxobutanoate + (6R)-5,10-methylene-5,6,7,8-tetrahydrofolate + H2O = 2-dehydropantoate + (6S)-5,6,7,8-tetrahydrofolate. It participates in cofactor biosynthesis; (R)-pantothenate biosynthesis; (R)-pantoate from 3-methyl-2-oxobutanoate: step 1/2. Functionally, catalyzes the reversible reaction in which hydroxymethyl group from 5,10-methylenetetrahydrofolate is transferred onto alpha-ketoisovalerate to form ketopantoate. The protein is 3-methyl-2-oxobutanoate hydroxymethyltransferase of Rhodococcus jostii (strain RHA1).